The sequence spans 83 residues: U1-theraphotoxin-Hs1f (83 aa).

Positions 1-21 are cleaved as a signal peptide; the sequence is MKVTLIAILTCAAVLVLHTTA. Positions 22–48 are excised as a propeptide; it reads AEELEESQLMEVGMPDTELAAVDEERL. 3 disulfides stabilise this stretch: cysteine 51-cysteine 64, cysteine 55-cysteine 75, and cysteine 69-cysteine 80.

This sequence belongs to the neurotoxin 12 (Hwtx-2) family. 02 (Hwtx-2) subfamily. In terms of tissue distribution, expressed by the venom gland.

The protein localises to the secreted. Its function is as follows. Lethal neurotoxin that blocks neuromuscular transmission. The protein is U1-theraphotoxin-Hs1f of Cyriopagopus schmidti (Chinese bird spider).